The primary structure comprises 520 residues: Glutamyl-tRNA(Gln) amidotransferase subunit A (520 aa).

Residues lysine 80 and serine 155 each act as charge relay system in the active site. Serine 179 functions as the Acyl-ester intermediate in the catalytic mechanism.

It belongs to the amidase family. GatA subfamily. Heterotrimer of A, B and C subunits.

It catalyses the reaction L-glutamyl-tRNA(Gln) + L-glutamine + ATP + H2O = L-glutaminyl-tRNA(Gln) + L-glutamate + ADP + phosphate + H(+). In terms of biological role, allows the formation of correctly charged Gln-tRNA(Gln) through the transamidation of misacylated Glu-tRNA(Gln) in organisms which lack glutaminyl-tRNA synthetase. The reaction takes place in the presence of glutamine and ATP through an activated gamma-phospho-Glu-tRNA(Gln). This Renibacterium salmoninarum (strain ATCC 33209 / DSM 20767 / JCM 11484 / NBRC 15589 / NCIMB 2235) protein is Glutamyl-tRNA(Gln) amidotransferase subunit A.